A 290-amino-acid chain; its full sequence is Acetylglutamate kinase (290 aa).

Residues 60–61, Arg-82, and Asn-185 each bind substrate; that span reads GG.

It belongs to the acetylglutamate kinase family. ArgB subfamily.

It is found in the cytoplasm. It catalyses the reaction N-acetyl-L-glutamate + ATP = N-acetyl-L-glutamyl 5-phosphate + ADP. The protein operates within amino-acid biosynthesis; L-arginine biosynthesis; N(2)-acetyl-L-ornithine from L-glutamate: step 2/4. Its function is as follows. Catalyzes the ATP-dependent phosphorylation of N-acetyl-L-glutamate. This Archaeoglobus fulgidus (strain ATCC 49558 / DSM 4304 / JCM 9628 / NBRC 100126 / VC-16) protein is Acetylglutamate kinase.